We begin with the raw amino-acid sequence, 353 residues long: Photosystem II D2 protein (353 aa).

The residue at position 2 (threonine 2) is an N-acetylthreonine. A Phosphothreonine modification is found at threonine 2. Residues 41-61 (CAYFALGGWFTGTTFVTSWYT) traverse the membrane as a helical segment. Residue histidine 118 coordinates chlorophyll a. The chain crosses the membrane as a helical span at residues 125–141 (GFMLRQFELARSVQLRP). Glutamine 130 and asparagine 143 together coordinate pheophytin a. The chain crosses the membrane as a helical span at residues 153–166 (VFVSVFLIYPLGQS). A chlorophyll a-binding site is contributed by histidine 198. A helical transmembrane segment spans residues 208–228 (AALLCAIHGATVENTLFEDGD). Positions 215 and 262 each coordinate a plastoquinone. Histidine 215 is a Fe cation binding site. Histidine 269 serves as a coordination point for Fe cation. Residues 279 to 295 (GLWMSAIGVVGLALNLR) form a helical membrane-spanning segment.

It belongs to the reaction center PufL/M/PsbA/D family. PSII is composed of 1 copy each of membrane proteins PsbA, PsbB, PsbC, PsbD, PsbE, PsbF, PsbH, PsbI, PsbJ, PsbK, PsbL, PsbM, PsbT, PsbX, PsbY, PsbZ, Psb30/Ycf12, at least 3 peripheral proteins of the oxygen-evolving complex and a large number of cofactors. It forms dimeric complexes. The D1/D2 heterodimer binds P680, chlorophylls that are the primary electron donor of PSII, and subsequent electron acceptors. It shares a non-heme iron and each subunit binds pheophytin, quinone, additional chlorophylls, carotenoids and lipids. There is also a Cl(-1) ion associated with D1 and D2, which is required for oxygen evolution. The PSII complex binds additional chlorophylls, carotenoids and specific lipids. serves as cofactor.

The protein resides in the plastid. Its subcellular location is the chloroplast thylakoid membrane. The enzyme catalyses 2 a plastoquinone + 4 hnu + 2 H2O = 2 a plastoquinol + O2. Photosystem II (PSII) is a light-driven water:plastoquinone oxidoreductase that uses light energy to abstract electrons from H(2)O, generating O(2) and a proton gradient subsequently used for ATP formation. It consists of a core antenna complex that captures photons, and an electron transfer chain that converts photonic excitation into a charge separation. The D1/D2 (PsbA/PsbD) reaction center heterodimer binds P680, the primary electron donor of PSII as well as several subsequent electron acceptors. D2 is needed for assembly of a stable PSII complex. The chain is Photosystem II D2 protein from Cryptomeria japonica (Japanese cedar).